Consider the following 357-residue polypeptide: 3-isopropylmalate dehydrogenase (357 aa).

NAD(+) is bound at residue glycine 76–glutamate 89. Residues arginine 96, arginine 106, arginine 134, and aspartate 224 each contribute to the substrate site. The Mg(2+) site is built by aspartate 224, aspartate 248, and aspartate 252. An NAD(+)-binding site is contributed by glycine 282–asparagine 294.

It belongs to the isocitrate and isopropylmalate dehydrogenases family. LeuB type 1 subfamily. In terms of assembly, homodimer. Mg(2+) is required as a cofactor. It depends on Mn(2+) as a cofactor.

It localises to the cytoplasm. The enzyme catalyses (2R,3S)-3-isopropylmalate + NAD(+) = 4-methyl-2-oxopentanoate + CO2 + NADH. It participates in amino-acid biosynthesis; L-leucine biosynthesis; L-leucine from 3-methyl-2-oxobutanoate: step 3/4. Functionally, catalyzes the oxidation of 3-carboxy-2-hydroxy-4-methylpentanoate (3-isopropylmalate) to 3-carboxy-4-methyl-2-oxopentanoate. The product decarboxylates to 4-methyl-2 oxopentanoate. The chain is 3-isopropylmalate dehydrogenase from Saccharophagus degradans (strain 2-40 / ATCC 43961 / DSM 17024).